Reading from the N-terminus, the 442-residue chain is D-serine dehydratase (442 aa).

At lysine 118 the chain carries N6-(pyridoxal phosphate)lysine.

The protein belongs to the serine/threonine dehydratase family. DsdA subfamily. Monomer. It depends on pyridoxal 5'-phosphate as a cofactor.

The catalysed reaction is D-serine = pyruvate + NH4(+). The chain is D-serine dehydratase from Escherichia coli (strain 55989 / EAEC).